The primary structure comprises 555 residues: Methyl-coenzyme M reductase subunit alpha (555 aa).

Coenzyme F430 is bound at residue Q152. Coenzyme B is bound by residues R230, 261-262 (KH), and R275. Residues Y337 and Y448 each coordinate coenzyme M.

The protein belongs to the methyl-coenzyme M reductase alpha subunit family. MCR is a hexamer of two alpha, two beta, and two gamma chains, forming a dimer of heterotrimers. It depends on coenzyme F430 as a cofactor.

It is found in the cytoplasm. The catalysed reaction is coenzyme B + methyl-coenzyme M = methane + coenzyme M-coenzyme B heterodisulfide. It functions in the pathway one-carbon metabolism; methyl-coenzyme M reduction; methane from methyl-coenzyme M: step 1/1. Its function is as follows. Component of the methyl-coenzyme M reductase (MCR) I that catalyzes the reductive cleavage of methyl-coenzyme M (CoM-S-CH3 or 2-(methylthio)ethanesulfonate) using coenzyme B (CoB or 7-mercaptoheptanoylthreonine phosphate) as reductant which results in the production of methane and the mixed heterodisulfide of CoB and CoM (CoM-S-S-CoB). This is the final step in methanogenesis. This Methanococcus voltae protein is Methyl-coenzyme M reductase subunit alpha (mcrA).